The following is a 129-amino-acid chain: Iron-sulfur cluster assembly 1 homolog, mitochondrial (129 aa).

The transit peptide at 1–12 (MSASIARATVRA) directs the protein to the mitochondrion. Fe cation contacts are provided by C57, C121, and C123.

Belongs to the HesB/IscA family.

It localises to the mitochondrion. Its function is as follows. Involved in the maturation of mitochondrial 4Fe-4S proteins functioning late in the iron-sulfur cluster assembly pathway. Probably involved in the binding of an intermediate of Fe/S cluster assembly. This is Iron-sulfur cluster assembly 1 homolog, mitochondrial (isca1) from Danio rerio (Zebrafish).